The following is a 637-amino-acid chain: Phosphomethylpyrimidine synthase (637 aa).

Substrate-binding positions include N242, M271, Y300, H336, S356–G358, D397–R400, and E436. H440 provides a ligand contact to Zn(2+). Y463 provides a ligand contact to substrate. Zn(2+) is bound at residue H504. Residues C584, C587, and C592 each coordinate [4Fe-4S] cluster.

Belongs to the ThiC family. Homodimer. [4Fe-4S] cluster is required as a cofactor.

The catalysed reaction is 5-amino-1-(5-phospho-beta-D-ribosyl)imidazole + S-adenosyl-L-methionine = 4-amino-2-methyl-5-(phosphooxymethyl)pyrimidine + CO + 5'-deoxyadenosine + formate + L-methionine + 3 H(+). It participates in cofactor biosynthesis; thiamine diphosphate biosynthesis. Functionally, catalyzes the synthesis of the hydroxymethylpyrimidine phosphate (HMP-P) moiety of thiamine from aminoimidazole ribotide (AIR) in a radical S-adenosyl-L-methionine (SAM)-dependent reaction. The sequence is that of Phosphomethylpyrimidine synthase from Janthinobacterium sp. (strain Marseille) (Minibacterium massiliensis).